We begin with the raw amino-acid sequence, 615 residues long: Putative binding protein BRA0576/BS1330_II0571 (615 aa).

Positions 1 to 29 (MLNRFIAFFRSVFLIGLVATAFGALPARA) are cleaved as a signal peptide.

It belongs to the bacterial solute-binding protein 5 family.

It is found in the periplasm. This Brucella suis biovar 1 (strain 1330) protein is Putative binding protein BRA0576/BS1330_II0571.